We begin with the raw amino-acid sequence, 218 residues long: Octanoyltransferase (218 aa).

The BPL/LPL catalytic domain occupies 32–214; the sequence is VLTADEIWLV…HFTQLLGYND (183 aa). Substrate is bound by residues 71-78, 143-145, and 156-158; these read RGGQITYH, SLG, and GLA. The active-site Acyl-thioester intermediate is the cysteine 174.

The protein belongs to the LipB family.

The protein resides in the cytoplasm. The catalysed reaction is octanoyl-[ACP] + L-lysyl-[protein] = N(6)-octanoyl-L-lysyl-[protein] + holo-[ACP] + H(+). It participates in protein modification; protein lipoylation via endogenous pathway; protein N(6)-(lipoyl)lysine from octanoyl-[acyl-carrier-protein]: step 1/2. Its function is as follows. Catalyzes the transfer of endogenously produced octanoic acid from octanoyl-acyl-carrier-protein onto the lipoyl domains of lipoate-dependent enzymes. Lipoyl-ACP can also act as a substrate although octanoyl-ACP is likely to be the physiological substrate. The protein is Octanoyltransferase of Histophilus somni (strain 2336) (Haemophilus somnus).